The primary structure comprises 144 residues: Transcription antitermination protein NusB (144 aa).

The protein belongs to the NusB family.

In terms of biological role, involved in transcription antitermination. Required for transcription of ribosomal RNA (rRNA) genes. Binds specifically to the boxA antiterminator sequence of the ribosomal RNA (rrn) operons. The chain is Transcription antitermination protein NusB from Dictyoglomus turgidum (strain DSM 6724 / Z-1310).